The chain runs to 362 residues: Sulfoquinovose monooxygenase (362 aa).

This sequence belongs to the SsuD family.

The enzyme catalyses 6-sulfo-D-quinovose + FMNH2 + O2 = 6-dehydro-D-glucose + FMN + sulfite + H2O + 2 H(+). Functionally, part of the alkanesulfonate monooxygenase (sulfo-ASMO) pathway, a D-sulfoquinovose degradation pathway that enables the complete utilization of all carbons within sulfoquinovose (SQ) with concomitant production of inorganic sulfite. Catalyzes the oxidative desulfurization of sulfoquinovose to sulfite and 6-dehydro-D-glucose. The protein is Sulfoquinovose monooxygenase of Novosphingobium aromaticivorans (strain ATCC 700278 / DSM 12444 / CCUG 56034 / CIP 105152 / NBRC 16084 / F199).